We begin with the raw amino-acid sequence, 131 residues long: MAILGLGTDIVEISRIEAVISRSGERLARRVLSANEWAIWETHQQPVRFLAKRFAVKEAAAKAFGTGIRNGLAFNQFEVFNDELGKPRLRLWGEALTLAEKLGVTHMHVTLADERHYACATVILESQISAG.

Mg(2+) is bound by residues aspartate 9 and glutamate 58.

This sequence belongs to the P-Pant transferase superfamily. AcpS family. Requires Mg(2+) as cofactor.

The protein resides in the cytoplasm. It carries out the reaction apo-[ACP] + CoA = holo-[ACP] + adenosine 3',5'-bisphosphate + H(+). In terms of biological role, transfers the 4'-phosphopantetheine moiety from coenzyme A to a Ser of acyl-carrier-protein. This is Holo-[acyl-carrier-protein] synthase from Salmonella arizonae (strain ATCC BAA-731 / CDC346-86 / RSK2980).